A 255-amino-acid chain; its full sequence is Leucyl/phenylalanyl-tRNA--protein transferase (255 aa).

It belongs to the L/F-transferase family.

Its subcellular location is the cytoplasm. It catalyses the reaction N-terminal L-lysyl-[protein] + L-leucyl-tRNA(Leu) = N-terminal L-leucyl-L-lysyl-[protein] + tRNA(Leu) + H(+). The enzyme catalyses N-terminal L-arginyl-[protein] + L-leucyl-tRNA(Leu) = N-terminal L-leucyl-L-arginyl-[protein] + tRNA(Leu) + H(+). The catalysed reaction is L-phenylalanyl-tRNA(Phe) + an N-terminal L-alpha-aminoacyl-[protein] = an N-terminal L-phenylalanyl-L-alpha-aminoacyl-[protein] + tRNA(Phe). Functionally, functions in the N-end rule pathway of protein degradation where it conjugates Leu, Phe and, less efficiently, Met from aminoacyl-tRNAs to the N-termini of proteins containing an N-terminal arginine or lysine. This is Leucyl/phenylalanyl-tRNA--protein transferase from Burkholderia thailandensis (strain ATCC 700388 / DSM 13276 / CCUG 48851 / CIP 106301 / E264).